The chain runs to 323 residues: Fructokinase-1 (323 aa).

Belongs to the carbohydrate kinase PfkB family. As to expression, expressed in root, endosperm and leaf tissues.

The catalysed reaction is D-fructose + ATP = D-fructose 6-phosphate + ADP + H(+). The protein operates within glycan biosynthesis; starch biosynthesis. With respect to regulation, completely inhibited at 50 mM ATP, but not inhibited at high fructose concentration. Fructokinase that may play an important role in maintaining the flux of carbon towards starch formation. May also be involved in a sugar-sensing pathway. In Oryza sativa subsp. japonica (Rice), this protein is Fructokinase-1.